The following is a 211-amino-acid chain: Uracil phosphoribosyltransferase (211 aa).

Residues R79, R104, and 131 to 139 each bind 5-phospho-alpha-D-ribose 1-diphosphate; that span reads DPMLATGGS. Uracil-binding positions include I196 and 201-203; that span reads GDA. D202 is a binding site for 5-phospho-alpha-D-ribose 1-diphosphate.

It belongs to the UPRTase family. Mg(2+) serves as cofactor.

It catalyses the reaction UMP + diphosphate = 5-phospho-alpha-D-ribose 1-diphosphate + uracil. It participates in pyrimidine metabolism; UMP biosynthesis via salvage pathway; UMP from uracil: step 1/1. Its activity is regulated as follows. Allosterically activated by GTP. Catalyzes the conversion of uracil and 5-phospho-alpha-D-ribose 1-diphosphate (PRPP) to UMP and diphosphate. This Limosilactobacillus reuteri (strain DSM 20016) (Lactobacillus reuteri) protein is Uracil phosphoribosyltransferase.